We begin with the raw amino-acid sequence, 469 residues long: 3-isopropylmalate dehydratase large subunit (469 aa).

[4Fe-4S] cluster contacts are provided by cysteine 347, cysteine 408, and cysteine 411.

Belongs to the aconitase/IPM isomerase family. LeuC type 1 subfamily. Heterodimer of LeuC and LeuD. Requires [4Fe-4S] cluster as cofactor.

It catalyses the reaction (2R,3S)-3-isopropylmalate = (2S)-2-isopropylmalate. The protein operates within amino-acid biosynthesis; L-leucine biosynthesis; L-leucine from 3-methyl-2-oxobutanoate: step 2/4. Catalyzes the isomerization between 2-isopropylmalate and 3-isopropylmalate, via the formation of 2-isopropylmaleate. This Haemophilus influenzae (strain ATCC 51907 / DSM 11121 / KW20 / Rd) protein is 3-isopropylmalate dehydratase large subunit.